We begin with the raw amino-acid sequence, 213 residues long: BAG family molecular chaperone regulator 6, mitochondrial (213 aa).

In terms of domain architecture, IQ spans 53 to 82; the sequence is DDAAAARIQAAFRGHLVRRHAAAVRGADDE. Residues 75-152 enclose the BAG domain; the sequence is AVRGADDEAT…GLQEVFDAVL (78 aa).

In terms of assembly, interacts with CAM1-1 under normal conditions. Dissociation of the interaction when calcium-CAM1-1 binding increases under saline-alkaline stress.

It localises to the mitochondrion. Co-chaperone that regulates stress responses. Acts as a negative regulator of saline-alkaline stress tolerance. May participate in stress response through regulating the homeostasis of iron, manganese and zinc ions. The polypeptide is BAG family molecular chaperone regulator 6, mitochondrial (Oryza sativa subsp. japonica (Rice)).